The chain runs to 655 residues: SRSF protein kinase 1 (655 aa).

Residues 1-57 (MERKVLALQARKKRTKAKKDKAQRKSETQHRGSAPHSESDLPEQEEEILGSDDDEQE) form a disordered region. The segment covering 10–22 (ARKKRTKAKKDKA) has biased composition (basic residues). Over residues 40–57 (DLPEQEEEILGSDDDEQE) the composition is skewed to acidic residues. S51 carries the post-translational modification Phosphoserine; by CK2. One can recognise a Protein kinase domain in the interval 80-653 (YHVIRKLGWG…AAECLRHPWL (574 aa)). ATP contacts are provided by residues 86–94 (LGWGHFSTV), K109, and 166–168 (EVL). D213 acts as the Proton acceptor in catalysis. Disordered regions lie at residues 238-341 (WQRS…QDQT) and 397-417 (FLSS…CTPI). A compositionally biased stretch (basic residues) spans 265–276 (KNKKKKLKKKQK). Basic and acidic residues-rich tracts occupy residues 277 to 288 (RQAELLEKRMQE) and 304 to 318 (NKQE…RPLK). A phosphoserine mark is found at S309, S311, and S333. Residue S555 is modified to Phosphoserine; by CK2.

The protein belongs to the protein kinase superfamily. CMGC Ser/Thr protein kinase family. In terms of assembly, monomer. Isoform 2 is found in a multisubunit complex containing seven proteins, named toposome, which separates entangled circular chromatin DNA during chromosome segregation. Isoform 2 interacts with DNAJC8 and AHSA1/AHA1 and this mediates formation of a complex with the Hsp70 /Hsp90 machinery. Isoform 1 is found in a complex with: DHX9, MOV10, MATR3, HNRNPU, NCL, DDX21, HSD17B4, PABPC1, HNRNPM, IGF2BP1, SYNCRIP, RPL3, VIM, YBX1, NPM1, HNRNPA2B1, HNRNPC, RPLP0, RPL7A and RALY. Isoform 2 binds to IGF2BP1, SYNCRIP, HNRNPA2B1 and HNRNPC. Isoform 1 and isoform 2 interact with SAFB which inhibits its activity. Isoform 2 interacts with SAFB2 which inhibits its activity. As to quaternary structure, (Microbial infection) Isoform 2 interacts with HHV-1 ICP27 protein. It depends on Mg(2+) as a cofactor. In terms of tissue distribution, isoform 2 is predominantly expressed in the testis but is also present at lower levels in heart, ovary, small intestine, liver, kidney, pancreas and skeletal muscle. Isoform 1 is only seen in the testis, at lower levels than isoform 2. Highly expressed in different erythroid and lymphoid cell lines, with isoform 2 being far more abundant than isoform 1.

The protein resides in the cytoplasm. Its subcellular location is the nucleus. It localises to the nucleus matrix. The protein localises to the microsome. It is found in the nucleoplasm. The protein resides in the nucleus speckle. Its subcellular location is the chromosome. The catalysed reaction is L-seryl-[protein] + ATP = O-phospho-L-seryl-[protein] + ADP + H(+). It carries out the reaction L-threonyl-[protein] + ATP = O-phospho-L-threonyl-[protein] + ADP + H(+). Its activity is regulated as follows. Activated by phosphorylation on Ser-51 and Ser-555. In terms of biological role, serine/arginine-rich protein-specific kinase which specifically phosphorylates its substrates at serine residues located in regions rich in arginine/serine dipeptides, known as RS domains and is involved in the phosphorylation of SR splicing factors and the regulation of splicing. Plays a central role in the regulatory network for splicing, controlling the intranuclear distribution of splicing factors in interphase cells and the reorganization of nuclear speckles during mitosis. Can influence additional steps of mRNA maturation, as well as other cellular activities, such as chromatin reorganization in somatic and sperm cells and cell cycle progression. Isoform 2 phosphorylates SFRS2, ZRSR2, LBR and PRM1. Isoform 2 phosphorylates SRSF1 using a directional (C-terminal to N-terminal) and a dual-track mechanism incorporating both processive phosphorylation (in which the kinase stays attached to the substrate after each round of phosphorylation) and distributive phosphorylation steps (in which the kinase and substrate dissociate after each phosphorylation event). The RS domain of SRSF1 binds first to a docking groove in the large lobe of the kinase domain of SRPK1. This induces certain structural changes in SRPK1 and/or RRM2 domain of SRSF1, allowing RRM2 to bind the kinase and initiate phosphorylation. The cycles continue for several phosphorylation steps in a processive manner (steps 1-8) until the last few phosphorylation steps (approximately steps 9-12). During that time, a mechanical stress induces the unfolding of the beta-4 motif in RRM2, which then docks at the docking groove of SRPK1. This also signals RRM2 to begin to dissociate, which facilitates SRSF1 dissociation after phosphorylation is completed. Isoform 2 can mediate hepatitis B virus (HBV) core protein phosphorylation. It plays a negative role in the regulation of HBV replication through a mechanism not involving the phosphorylation of the core protein but by reducing the packaging efficiency of the pregenomic RNA (pgRNA) without affecting the formation of the viral core particles. Isoform 1 and isoform 2 can induce splicing of exon 10 in MAPT/TAU. The ratio of isoform 1/isoform 2 plays a decisive role in determining cell fate in K-562 leukaemic cell line: isoform 2 favors proliferation where as isoform 1 favors differentiation. The chain is SRSF protein kinase 1 from Homo sapiens (Human).